We begin with the raw amino-acid sequence, 121 residues long: Large ribosomal subunit protein uL24 (121 aa).

The protein belongs to the universal ribosomal protein uL24 family. Part of the 50S ribosomal subunit.

Its function is as follows. One of two assembly initiator proteins, it binds directly to the 5'-end of the 23S rRNA, where it nucleates assembly of the 50S subunit. In terms of biological role, located at the polypeptide exit tunnel on the outside of the subunit. The sequence is that of Large ribosomal subunit protein uL24 from Pyrococcus abyssi (strain GE5 / Orsay).